The chain runs to 346 residues: NADH-cytochrome b5 reductase 2 (346 aa).

A helical membrane pass occupies residues Gly28–Leu50. Residues Gln95 to Ser200 form the FAD-binding FR-type domain. Lys203–Leu238 lines the FAD pocket.

It belongs to the flavoprotein pyridine nucleotide cytochrome reductase family. Requires FAD as cofactor.

Its subcellular location is the mitochondrion outer membrane. The enzyme catalyses 2 Fe(III)-[cytochrome b5] + NADH = 2 Fe(II)-[cytochrome b5] + NAD(+) + H(+). Its function is as follows. May mediate the reduction of outer membrane cytochrome b5. In Botryotinia fuckeliana (strain B05.10) (Noble rot fungus), this protein is NADH-cytochrome b5 reductase 2 (mcr1).